The primary structure comprises 219 residues: 2,3-bisphosphoglycerate-dependent phosphoglycerate mutase 2 (219 aa).

Substrate-binding positions include 8–15 (RHGQSIWN), 21–22 (TG), Arg-58, 85–88 (ERHY), Lys-96, 112–113 (RR), and 156–157 (GN). Residue His-9 is the Tele-phosphohistidine intermediate of the active site. The active-site Proton donor/acceptor is the Glu-85.

It belongs to the phosphoglycerate mutase family. BPG-dependent PGAM subfamily.

It carries out the reaction (2R)-2-phosphoglycerate = (2R)-3-phosphoglycerate. The protein operates within carbohydrate degradation; glycolysis; pyruvate from D-glyceraldehyde 3-phosphate: step 3/5. Its function is as follows. Catalyzes the interconversion of 2-phosphoglycerate and 3-phosphoglycerate. The protein is 2,3-bisphosphoglycerate-dependent phosphoglycerate mutase 2 of Gloeobacter violaceus (strain ATCC 29082 / PCC 7421).